The following is a 529-amino-acid chain: MDATALWQRYLEWLYYHPELGIYLDVSRMRFDSAFVETLAPQFAKAFADMAALEAGAIANPDEHRQVGHYWLRAPEIAPTEELKTEIVETLEQIETFAAKVHHGQIHPTRGGLFTDIISVGIGGSALGPQFVSQSLAPERPPLDIHFLDNTDPDGIDRVLNRVEPRLSTTLVIIISKSGGTPETRNGMLEVEKRFKDAGLNFAEHAVAITSYGSKLAQIAESAGWLAIFPMHDWVGGRTSELSAVGLLPAALQGIPIREMLHGAKLMDEATRVPDLKTNPAALLALSWYCAGEGKGKKDMVVLPYKDSLQLFSRYLQQLVMESLGKEKDLQGQVVHQGIAVYGNKGTTDQHAYVQQLREGLNNFFLTFIEVLQDRQGASVEVEPGITSGDYLSGLLLGTRQALYEKQRDSITLTLPQVTPLTVGALIALYERTVGLYGFLINVNAYHQPGVEAGKKAAAANLALQKQLLRILSQEPQPISLMTLAAKVGAPEQTETIYLLLRHLAANGRGVSLQGPPEQPDRLLVRATA.

Glutamate 322 serves as the catalytic Proton donor. Catalysis depends on residues histidine 351 and lysine 455.

Belongs to the GPI family.

Its subcellular location is the cytoplasm. The enzyme catalyses alpha-D-glucose 6-phosphate = beta-D-fructose 6-phosphate. Its pathway is carbohydrate biosynthesis; gluconeogenesis. It functions in the pathway carbohydrate degradation; glycolysis; D-glyceraldehyde 3-phosphate and glycerone phosphate from D-glucose: step 2/4. Its function is as follows. Catalyzes the reversible isomerization of glucose-6-phosphate to fructose-6-phosphate. This chain is Glucose-6-phosphate isomerase, found in Cyanothece sp. (strain PCC 7425 / ATCC 29141).